Here is a 93-residue protein sequence, read N- to C-terminus: NADH-ubiquinone oxidoreductase chain 4L (93 aa).

3 helical membrane-spanning segments follow: residues 3-23 (LTIL…GPLG), 27-47 (IIKL…LIIL), and 55-75 (ILGL…SAIG).

The protein belongs to the complex I subunit 4L family.

The protein localises to the mitochondrion membrane. It carries out the reaction a ubiquinone + NADH + 5 H(+)(in) = a ubiquinol + NAD(+) + 4 H(+)(out). Functionally, core subunit of the mitochondrial membrane respiratory chain NADH dehydrogenase (Complex I) that is believed to belong to the minimal assembly required for catalysis. Complex I functions in the transfer of electrons from NADH to the respiratory chain. The immediate electron acceptor for the enzyme is believed to be ubiquinone. This Wickerhamomyces canadensis (Yeast) protein is NADH-ubiquinone oxidoreductase chain 4L (ND4L).